We begin with the raw amino-acid sequence, 270 residues long: Probable ribosomal RNA small subunit methyltransferase A (270 aa).

6 residues coordinate S-adenosyl-L-methionine: H19, L21, G46, E67, D92, and N107.

This sequence belongs to the class I-like SAM-binding methyltransferase superfamily. rRNA adenine N(6)-methyltransferase family. RsmA subfamily.

The protein resides in the cytoplasm. Its function is as follows. Specifically dimethylates two adjacent adenosines in the loop of a conserved hairpin near the 3'-end of 16S rRNA in the 30S particle. May play a critical role in biogenesis of 30S subunits. The protein is Probable ribosomal RNA small subunit methyltransferase A of Methanococcoides burtonii (strain DSM 6242 / NBRC 107633 / OCM 468 / ACE-M).